Reading from the N-terminus, the 691-residue chain is Protein 4.2 (691 aa).

Residue glycine 2 is the site of N-myristoyl glycine attachment. The tract at residues 31-39 (LFVRRGQPF) is band 3 binding. Serine 248 is modified (phosphoserine; by PKA).

The protein belongs to the transglutaminase superfamily. Transglutaminase family. As to quaternary structure, component of the ankyrin-1 complex in the erythrocyte, composed of ANK1, RHCE, RHAG, SLC4A1, EPB42, GYPA, GYPB and AQP1. Interacts with SLC4A1 (via the cytoplasmic domain); this interaction is mediated by the SLC4A1 Band 3-I dimer. Interacts with ANK1 (via ANK 1-13 repeats). Interacts with AQP1 (via the C-terminal). Both cAMP-dependent kinase (CAPK) and another kinase present in the red-blood cells seem to be able to phosphorylate EPB42.

It localises to the cell membrane. It is found in the cytoplasm. Its subcellular location is the cytoskeleton. Its function is as follows. Component of the ankyrin-1 complex, a multiprotein complex involved in the stability and shape of the erythrocyte membrane. This Homo sapiens (Human) protein is Protein 4.2.